The sequence spans 189 residues: Ribulose bisphosphate carboxylase small subunit, chloroplastic (189 aa).

The N-terminal 66 residues, 1-66 (MASSIMALSS…KTTSNGSRVR (66 aa)), are a transit peptide targeting the chloroplast.

The protein belongs to the RuBisCO small chain family. In terms of assembly, heterohexadecamer of 8 large and 8 small subunits.

The protein localises to the plastid. The protein resides in the chloroplast. In terms of biological role, ruBisCO catalyzes two reactions: the carboxylation of D-ribulose 1,5-bisphosphate, the primary event in carbon dioxide fixation, as well as the oxidative fragmentation of the pentose substrate. Both reactions occur simultaneously and in competition at the same active site. Although the small subunit is not catalytic it is essential for maximal activity. This chain is Ribulose bisphosphate carboxylase small subunit, chloroplastic, found in Larix laricina (Tamarack).